Reading from the N-terminus, the 113-residue chain is Large ribosomal subunit protein bL17 (113 aa).

This sequence belongs to the bacterial ribosomal protein bL17 family. Part of the 50S ribosomal subunit. Contacts protein L32.

The sequence is that of Large ribosomal subunit protein bL17 from Symbiobacterium thermophilum (strain DSM 24528 / JCM 14929 / IAM 14863 / T).